Consider the following 89-residue polypeptide: Gallinacin-13 (89 aa).

Positions 1 to 23 (MRILQLLFAIVVILLLQDAPARG) are cleaved as a signal peptide. 3 disulfide bridges follow: Cys-30-Cys-58, Cys-37-Cys-51, and Cys-41-Cys-59. Residues 66 to 89 (PFSNPKHSVLHTAEQDPSPSLGGT) form a disordered region.

The protein belongs to the beta-defensin family. As to expression, expressed in the liver, gall bladder, kidney, small intestine, spleen, testis, ovary and male and female reproductive tracts. Not detected in the ovarian stroma and the theca and granulosa layers of the ovarian follicle.

It is found in the secreted. Its subcellular location is the cytoplasmic granule. In terms of biological role, has bactericidal activity. Potent activity against E.coli, L.monocytogenes, S.typhimurium and S.pyogenes but mot against S.aureus. Its function is as follows. Has bactericidal activity. In Gallus gallus (Chicken), this protein is Gallinacin-13 (GAL13).